A 547-amino-acid polypeptide reads, in one-letter code: ATP synthase subunit alpha (547 aa).

173–180 (GDRATGKT) is an ATP binding site. Residues 526–547 (PEAEALADEDVEQEQIVRQKRG) form a disordered region. Residues 528–538 (AEALADEDVEQ) are compositionally biased toward acidic residues.

It belongs to the ATPase alpha/beta chains family. F-type ATPases have 2 components, CF(1) - the catalytic core - and CF(0) - the membrane proton channel. CF(1) has five subunits: alpha(3), beta(3), gamma(1), delta(1), epsilon(1). CF(0) has three main subunits: a(1), b(2) and c(9-12). The alpha and beta chains form an alternating ring which encloses part of the gamma chain. CF(1) is attached to CF(0) by a central stalk formed by the gamma and epsilon chains, while a peripheral stalk is formed by the delta and b chains.

The protein resides in the cell membrane. The enzyme catalyses ATP + H2O + 4 H(+)(in) = ADP + phosphate + 5 H(+)(out). Produces ATP from ADP in the presence of a proton gradient across the membrane. The alpha chain is a regulatory subunit. This is ATP synthase subunit alpha from Nocardioides sp. (strain ATCC BAA-499 / JS614).